The primary structure comprises 1054 residues: DIS3-like exonuclease 1 (1054 aa).

Residues 236–313 form the CSD1 domain; that stretch reads AGIKSGRYIQ…WKGRTAALCE (78 aa). Residues 313 to 332 form a disordered region; that stretch reads ENDSEDKASGESPSEPMPTG. The 67-residue stretch at 365–431 folds into the CSD2 domain; that stretch reads ILVTPWDYRI…GEIATILVEN (67 aa). An RNB domain is found at 465-816; it reads RRDLRSTHLV…VHRLLMAAIS (352 aa). Position 989 is a phosphoserine (S989).

Belongs to the RNR ribonuclease family. In terms of assembly, component of the RNA exosome complex. The catalytically inactive RNA exosome core (Exo-9) complex is believed to associate with catalytic subunits EXOSC10, and DIS3 or DIS3L in cytoplasmic- and nuclear-specific RNA exosome complex forms. The cofactor is Mg(2+).

The protein resides in the cytoplasm. It catalyses the reaction Exonucleolytic cleavage in the 3'- to 5'-direction to yield nucleoside 5'-phosphates.. In terms of biological role, catalytic component of the RNA exosome complex which has 3'-&gt;5' exoribonuclease activity and participates in a multitude of cellular RNA processing and degradation events. In the cytoplasm, the RNA exosome complex is involved in general mRNA turnover and specifically degrades inherently unstable mRNAs containing AU-rich elements (AREs) within their 3' untranslated regions, and in RNA surveillance pathways, preventing translation of aberrant mRNAs. It seems to be involved in degradation of histone mRNA. This is DIS3-like exonuclease 1 (Dis3l) from Rattus norvegicus (Rat).